Consider the following 258-residue polypeptide: Probable S-methyl-5'-thioinosine phosphorylase (258 aa).

Residue 53 to 54 (RH) participates in phosphate binding. Residue M180 participates in substrate binding. T181 lines the phosphate pocket. 204–206 (NQA) contacts substrate.

It belongs to the PNP/MTAP phosphorylase family. MTAP subfamily. In terms of assembly, homotrimer.

The catalysed reaction is S-methyl-5'-thioinosine + phosphate = 5-(methylsulfanyl)-alpha-D-ribose 1-phosphate + hypoxanthine. It participates in purine metabolism; purine nucleoside salvage. Catalyzes the reversible phosphorylation of S-methyl-5'-thioinosine (MTI) to hypoxanthine and 5-methylthioribose-1-phosphate. Involved in the breakdown of S-methyl-5'-thioadenosine (MTA), a major by-product of polyamine biosynthesis. Catabolism of (MTA) occurs via deamination to MTI and phosphorolysis to hypoxanthine. The chain is Probable S-methyl-5'-thioinosine phosphorylase from Methanosarcina acetivorans (strain ATCC 35395 / DSM 2834 / JCM 12185 / C2A).